The sequence spans 165 residues: Methylated-DNA--protein-cysteine methyltransferase (165 aa).

Cys126 acts as the Nucleophile; methyl group acceptor in catalysis.

It belongs to the MGMT family.

The protein resides in the cytoplasm. The enzyme catalyses a 6-O-methyl-2'-deoxyguanosine in DNA + L-cysteinyl-[protein] = S-methyl-L-cysteinyl-[protein] + a 2'-deoxyguanosine in DNA. It carries out the reaction a 4-O-methyl-thymidine in DNA + L-cysteinyl-[protein] = a thymidine in DNA + S-methyl-L-cysteinyl-[protein]. Involved in the cellular defense against the biological effects of O6-methylguanine (O6-MeG) and O4-methylthymine (O4-MeT) in DNA. Repairs the methylated nucleobase in DNA by stoichiometrically transferring the methyl group to a cysteine residue in the enzyme. This is a suicide reaction: the enzyme is irreversibly inactivated. In Mycobacterium bovis (strain ATCC BAA-935 / AF2122/97), this protein is Methylated-DNA--protein-cysteine methyltransferase.